Reading from the N-terminus, the 359-residue chain is Type-1 angiotensin II receptor A (359 aa).

At 1–25 the chain is on the extracellular side; the sequence is MALNSSTEDGIKRIQDDCPRAGRHS. An N-linked (GlcNAc...) asparagine glycan is attached at Asn4. Angiotensin II contacts are provided by Gln15 and Asp17. Cystine bridges form between Cys18–Cys274 and Cys101–Cys180. The chain crosses the membrane as a helical span at residues 26-55; that stretch reads YIFVMIPTLYSIIFVVGIFGNSLVVIVIYF. Over 56-61 the chain is Cytoplasmic; it reads YMKLKT. Residues 62-89 traverse the membrane as a helical segment; it reads VASVFLLNLALADLCFLLTLPLWAVYTA. The Extracellular segment spans residues 90-98; that stretch reads MEYRWPFGN. A helical transmembrane segment spans residues 99 to 125; it reads HLCKIASASVSFNLYASVFLLTCLSID. Over 126 to 141 the chain is Cytoplasmic; sequence RYLAIVHPMKSRLRRT. The chain crosses the membrane as a helical span at residues 142–165; that stretch reads MLVAKVTCIIIWLMAGLASLPAVI. Residues 166–190 lie on the Extracellular side of the membrane; that stretch reads HRNVYFIENTNITVCAFHYESRNST. Arg167 contributes to the angiotensin II binding site. Asn176 is a glycosylation site (N-linked (GlcNAc...) asparagine). 3 residues coordinate angiotensin II: Phe182, His183, and Tyr184. A glycan (N-linked (GlcNAc...) asparagine) is linked at Asn188. The chain crosses the membrane as a helical span at residues 191–216; it reads LPIGLGLTKNILGFLFPFLIILTSYT. Angiotensin II is bound at residue Lys199. Topologically, residues 217–239 are cytoplasmic; that stretch reads LIWKALKKAYEIQKNKPRNDDIF. The chain crosses the membrane as a helical span at residues 240 to 268; it reads RIIMAIVLFFFFSWVPHQIFTFLDVLIQL. Topologically, residues 269–278 are extracellular; the sequence is GVIHDCKIAD. The helical transmembrane segment at 279–304 threads the bilayer; sequence IVDTAMPITICIAYFNNCLNPLFYGF. The Cytoplasmic portion of the chain corresponds to 305 to 359; it reads LGKKFKKYFLQLLKYIPPKAKSHSSLSTKMSTLSYRPSDNMSSAAKKPASCSEVE. The segment covering 335–347 has biased composition (polar residues); that stretch reads STLSYRPSDNMSS. The interval 335–359 is disordered; the sequence is STLSYRPSDNMSSAAKKPASCSEVE. A lipid anchor (S-palmitoyl cysteine) is attached at Cys355.

The protein belongs to the G-protein coupled receptor 1 family. In terms of assembly, interacts with MAS1. Interacts with ARRB1. Interacts with FLNA (via filamin repeat 21); increases PKA-mediated phosphorylation of FLNA. C-terminal Ser or Thr residues may be phosphorylated.

The protein localises to the cell membrane. In terms of biological role, receptor for angiotensin II, a vasoconstricting peptide, which acts as a key regulator of blood pressure and sodium retention by the kidney. The activated receptor in turn couples to G-alpha proteins G(q) (GNAQ, GNA11, GNA14 or GNA15) and thus activates phospholipase C and increases the cytosolic Ca(2+) concentrations, which in turn triggers cellular responses such as stimulation of protein kinase C. The protein is Type-1 angiotensin II receptor A (Agtr1a) of Mus musculus (Mouse).